Reading from the N-terminus, the 56-residue chain is Large ribosomal subunit protein bL32 (56 aa).

Residues 1 to 40 (MAVQQNKKSRSKRGMRRSHDSLGTAQLSVDATSGELHRRH) are disordered. The segment covering 7 to 16 (KKSRSKRGMR) has biased composition (basic residues). The span at 21–31 (SLGTAQLSVDA) shows a compositional bias: polar residues.

This sequence belongs to the bacterial ribosomal protein bL32 family.

In Shewanella halifaxensis (strain HAW-EB4), this protein is Large ribosomal subunit protein bL32.